Here is a 38-residue protein sequence, read N- to C-terminus: Defensin (38 aa).

3 disulfides stabilise this stretch: cysteine 4/cysteine 26, cysteine 11/cysteine 34, and cysteine 15/cysteine 36.

The protein belongs to the invertebrate defensin family. Type 2 subfamily.

The protein localises to the secreted. In terms of biological role, mediates the inducible antibacterial activity in larvae of A.cyanea. This chain is Defensin, found in Aeshna cyanea (Southern hawker dragonfly).